We begin with the raw amino-acid sequence, 103 residues long: uncharacterized protein (103 aa).

An EthD domain is found at Ala12–Ser88.

This is an uncharacterized protein from Rhodococcus erythropolis (Arthrobacter picolinophilus).